We begin with the raw amino-acid sequence, 352 residues long: Beta-1,4-xylanase (352 aa).

Residues 1 to 23 form the signal peptide; the sequence is MINQRFSILVLLLILLTFSLGFL. One can recognise a GH10 domain in the interval 29 to 352; it reads GMEIPSLKEV…KKAFWEIVKF (324 aa). Glu155 functions as the Proton donor in the catalytic mechanism. The Nucleophile role is filled by Glu262.

The protein belongs to the glycosyl hydrolase 10 (cellulase F) family.

Its subcellular location is the secreted. The catalysed reaction is Endohydrolysis of (1-&gt;4)-beta-D-xylosidic linkages in xylans.. Its pathway is glycan degradation; xylan degradation. This Dictyoglomus thermophilum protein is Beta-1,4-xylanase (xynA).